The chain runs to 127 residues: Large ribosomal subunit protein bL21 (127 aa).

The protein belongs to the bacterial ribosomal protein bL21 family. In terms of assembly, part of the 50S ribosomal subunit. Contacts protein L20.

Functionally, this protein binds to 23S rRNA in the presence of protein L20. The chain is Large ribosomal subunit protein bL21 from Synechococcus sp. (strain ATCC 27144 / PCC 6301 / SAUG 1402/1) (Anacystis nidulans).